We begin with the raw amino-acid sequence, 318 residues long: MFFINILTLLVPILIAMAFLTLVERKILGYMQLRKGPNIVGPYGILQPFADAMKLFMKEPMRPLTTSMSLFIIAPTLSLTLALSLWVPLPMPHPLINLNLGILFILATSSLSVYSILWSGWASNSKYSLFGALRAVAQTISYEVTMAIILLSVLLMNGSYSLQTLITTQEHMWLLLPAWPMAMMWFISTLAETNRAPFDLTEGESELVSGFNVEYAAGPFALFFMAEYTNIILMNALTTIIFLGPLYYINLPELYSTNFMMEALLLSSTFLWIRASYPRFRYDQLMHLLWKNFLPLTLALCMWHISLPIFTAGVPPYM.

Transmembrane regions (helical) follow at residues 2–22 (FFIN…FLTL), 70–90 (LFII…VPLP), 100–120 (LGIL…LWSG), 136–156 (VAQT…VLLM), 171–191 (HMWL…STLA), 231–251 (IILM…YINL), 253–273 (ELYS…FLWI), and 293–313 (FLPL…FTAG).

The protein belongs to the complex I subunit 1 family. Core subunit of respiratory chain NADH dehydrogenase (Complex I) which is composed of 45 different subunits.

The protein resides in the mitochondrion inner membrane. The enzyme catalyses a ubiquinone + NADH + 5 H(+)(in) = a ubiquinol + NAD(+) + 4 H(+)(out). Functionally, core subunit of the mitochondrial membrane respiratory chain NADH dehydrogenase (Complex I) which catalyzes electron transfer from NADH through the respiratory chain, using ubiquinone as an electron acceptor. Essential for the catalytic activity and assembly of complex I. This is NADH-ubiquinone oxidoreductase chain 1 (Mtnd1) from Mus musculus (Mouse).